Here is a 621-residue protein sequence, read N- to C-terminus: Methionine--tRNA ligase (621 aa).

The 'HIGH' region motif lies at 11 to 21; the sequence is PYANGPRHIGH. Zn(2+) is bound by residues cysteine 143, cysteine 146, cysteine 156, and cysteine 159. Positions 347–351 match the 'KMSKS' region motif; the sequence is KFSSS. Serine 350 is a binding site for ATP.

This sequence belongs to the class-I aminoacyl-tRNA synthetase family. MetG type 1 subfamily. As to quaternary structure, monomer. The cofactor is Zn(2+).

Its subcellular location is the cytoplasm. It carries out the reaction tRNA(Met) + L-methionine + ATP = L-methionyl-tRNA(Met) + AMP + diphosphate. Functionally, is required not only for elongation of protein synthesis but also for the initiation of all mRNA translation through initiator tRNA(fMet) aminoacylation. The polypeptide is Methionine--tRNA ligase (Bifidobacterium longum subsp. infantis (strain ATCC 15697 / DSM 20088 / JCM 1222 / NCTC 11817 / S12)).